The primary structure comprises 387 residues: Chorismate synthase (387 aa).

Positions 39 and 45 each coordinate NADP(+). Positions 92–113 are disordered; the sequence is PVEEGSEEKRRVSRPRPGHADL. FMN contacts are provided by residues 130 to 132, 250 to 251, Gly-295, 310 to 314, and Arg-336; these read RSS, QA, and KPIPT.

It belongs to the chorismate synthase family. In terms of assembly, homotetramer. It depends on FMNH2 as a cofactor.

It carries out the reaction 5-O-(1-carboxyvinyl)-3-phosphoshikimate = chorismate + phosphate. The protein operates within metabolic intermediate biosynthesis; chorismate biosynthesis; chorismate from D-erythrose 4-phosphate and phosphoenolpyruvate: step 7/7. In terms of biological role, catalyzes the anti-1,4-elimination of the C-3 phosphate and the C-6 proR hydrogen from 5-enolpyruvylshikimate-3-phosphate (EPSP) to yield chorismate, which is the branch point compound that serves as the starting substrate for the three terminal pathways of aromatic amino acid biosynthesis. This reaction introduces a second double bond into the aromatic ring system. This Brevibacillus brevis (strain 47 / JCM 6285 / NBRC 100599) protein is Chorismate synthase.